The sequence spans 508 residues: Photosystem II CP47 reaction center protein (508 aa).

The next 6 helical transmembrane spans lie at 21 to 36 (AVHI…WAGS), 101 to 115 (IVFS…IWHW), 140 to 156 (GIHL…FGAF), 203 to 218 (IAAG…FHLS), 237 to 252 (VLSS…AFVV), and 457 to 472 (SFAL…HGSR).

This sequence belongs to the PsbB/PsbC family. PsbB subfamily. As to quaternary structure, PSII is composed of 1 copy each of membrane proteins PsbA, PsbB, PsbC, PsbD, PsbE, PsbF, PsbH, PsbI, PsbJ, PsbK, PsbL, PsbM, PsbT, PsbX, PsbY, PsbZ, Psb30/Ycf12, at least 3 peripheral proteins of the oxygen-evolving complex and a large number of cofactors. It forms dimeric complexes. Binds multiple chlorophylls. PSII binds additional chlorophylls, carotenoids and specific lipids. is required as a cofactor.

The protein resides in the plastid. The protein localises to the chloroplast thylakoid membrane. In terms of biological role, one of the components of the core complex of photosystem II (PSII). It binds chlorophyll and helps catalyze the primary light-induced photochemical processes of PSII. PSII is a light-driven water:plastoquinone oxidoreductase, using light energy to abstract electrons from H(2)O, generating O(2) and a proton gradient subsequently used for ATP formation. This Lotus japonicus (Lotus corniculatus var. japonicus) protein is Photosystem II CP47 reaction center protein.